The sequence spans 159 residues: Protein C2 (159 aa).

Positions 43-60 (KKRPPKLTWAPKKKRRKA) match the Nuclear localization signal motif. A zinc finger lies at 65–81 (CGCSYYGGIDCEDGFTH). Positions 102–139 (PNLLPPPEHNNNGDGEQNNNITNQSQPQPAESVGSPDL) are disordered. Over residues 110-124 (HNNNGDGEQNNNITN) the composition is skewed to low complexity.

It belongs to the geminiviridae transcriptional activator protein family. In terms of assembly, monomer. Suppress local silencing by interacting with and inactivating host adenosine kinase 2 (ADK2) in the cytoplasm. Interacts with and inhibits host SNF1 kinase.

It localises to the host cytoplasm. In terms of biological role, acts as a suppressor of RNA-mediated gene silencing, also known as post-transcriptional gene silencing (PTGS), a mechanism of plant viral defense that limits the accumulation of viral RNAs. Suppresses the host RNA silencing by inhibiting adenosine kinase 2 (ADK2), a kinase involved in a general methylation pathway. Also suppresses the host basal defense by interacting with and inhibiting SNF1 kinase, a key regulator of cell metabolism implicated in innate antiviral defense. Determines pathogenicity. This Tomato pseudo-curly top virus (TPCTV) protein is Protein C2.